An 83-amino-acid polypeptide reads, in one-letter code: Small ribosomal subunit protein uS17 (83 aa).

The protein belongs to the universal ribosomal protein uS17 family. In terms of assembly, part of the 30S ribosomal subunit.

Its function is as follows. One of the primary rRNA binding proteins, it binds specifically to the 5'-end of 16S ribosomal RNA. The protein is Small ribosomal subunit protein uS17 of Magnetococcus marinus (strain ATCC BAA-1437 / JCM 17883 / MC-1).